We begin with the raw amino-acid sequence, 787 residues long: Endonuclease MutS2 (787 aa).

334-341 (GPNTGGKT) serves as a coordination point for ATP. Residues 712-787 (LDLRGKRYEE…GNGATIVTFK (76 aa)) enclose the Smr domain.

This sequence belongs to the DNA mismatch repair MutS family. MutS2 subfamily. As to quaternary structure, homodimer. Binds to stalled ribosomes, contacting rRNA.

Its function is as follows. Endonuclease that is involved in the suppression of homologous recombination and thus may have a key role in the control of bacterial genetic diversity. Functionally, acts as a ribosome collision sensor, splitting the ribosome into its 2 subunits. Detects stalled/collided 70S ribosomes which it binds and splits by an ATP-hydrolysis driven conformational change. Acts upstream of the ribosome quality control system (RQC), a ribosome-associated complex that mediates the extraction of incompletely synthesized nascent chains from stalled ribosomes and their subsequent degradation. Probably generates substrates for RQC. The polypeptide is Endonuclease MutS2 (Latilactobacillus sakei subsp. sakei (strain 23K) (Lactobacillus sakei subsp. sakei)).